Here is a 624-residue protein sequence, read N- to C-terminus: Glucoamylase (624 aa).

A signal peptide spans 1-18 (MRQFLALAAAASIAVADS). Positions 26 to 132 (NSPPDDKAVA…NSQQLNVQVE (107 aa)) constitute a CBM21 domain. N54, N70, N98, N111, N168, N267, and N333 each carry an N-linked (GlcNAc...) asparagine glycan. D340 acts as the Proton acceptor in catalysis. E343 (proton donor) is an active-site residue. N460 and N582 each carry an N-linked (GlcNAc...) asparagine glycan.

This sequence belongs to the glycosyl hydrolase 15 family.

The catalysed reaction is Hydrolysis of terminal (1-&gt;4)-linked alpha-D-glucose residues successively from non-reducing ends of the chains with release of beta-D-glucose.. The protein is Glucoamylase (GAA) of Blastobotrys adeninivorans (Yeast).